We begin with the raw amino-acid sequence, 303 residues long: ATP synthase gamma chain (303 aa).

This sequence belongs to the ATPase gamma chain family. As to quaternary structure, F-type ATPases have 2 components, CF(1) - the catalytic core - and CF(0) - the membrane proton channel. CF(1) has five subunits: alpha(3), beta(3), gamma(1), delta(1), epsilon(1). CF(0) has three main subunits: a, b and c.

The protein localises to the cell inner membrane. Its function is as follows. Produces ATP from ADP in the presence of a proton gradient across the membrane. The gamma chain is believed to be important in regulating ATPase activity and the flow of protons through the CF(0) complex. This is ATP synthase gamma chain from Bartonella henselae (strain ATCC 49882 / DSM 28221 / CCUG 30454 / Houston 1) (Rochalimaea henselae).